The primary structure comprises 439 residues: Proline--tRNA ligase (439 aa).

Belongs to the class-II aminoacyl-tRNA synthetase family. ProS type 2 subfamily. As to quaternary structure, homodimer.

The protein localises to the cytoplasm. The catalysed reaction is tRNA(Pro) + L-proline + ATP = L-prolyl-tRNA(Pro) + AMP + diphosphate. In terms of biological role, catalyzes the attachment of proline to tRNA(Pro) in a two-step reaction: proline is first activated by ATP to form Pro-AMP and then transferred to the acceptor end of tRNA(Pro). In Phenylobacterium zucineum (strain HLK1), this protein is Proline--tRNA ligase.